Reading from the N-terminus, the 352-residue chain is Phosphoribosylformylglycinamidine cyclo-ligase (352 aa).

It belongs to the AIR synthase family.

The protein resides in the cytoplasm. It carries out the reaction 2-formamido-N(1)-(5-O-phospho-beta-D-ribosyl)acetamidine + ATP = 5-amino-1-(5-phospho-beta-D-ribosyl)imidazole + ADP + phosphate + H(+). Its pathway is purine metabolism; IMP biosynthesis via de novo pathway; 5-amino-1-(5-phospho-D-ribosyl)imidazole from N(2)-formyl-N(1)-(5-phospho-D-ribosyl)glycinamide: step 2/2. In Saccharophagus degradans (strain 2-40 / ATCC 43961 / DSM 17024), this protein is Phosphoribosylformylglycinamidine cyclo-ligase.